A 236-amino-acid polypeptide reads, in one-letter code: Phospholipid hydroperoxide glutathione peroxidase, chloroplastic (236 aa).

Residues 1-64 constitute a chloroplast transit peptide; it reads MASMAFSTTF…SNFPIVPSKT (64 aa). The active site involves C111.

Belongs to the glutathione peroxidase family.

The protein resides in the plastid. It localises to the chloroplast stroma. It carries out the reaction a hydroperoxy polyunsaturated fatty acid + 2 glutathione = a hydroxy polyunsaturated fatty acid + glutathione disulfide + H2O. Its function is as follows. Protects cells and enzymes from oxidative damage, by catalyzing the reduction of hydrogen peroxide, lipid peroxides and organic hydroperoxide, by glutathione. The protein is Phospholipid hydroperoxide glutathione peroxidase, chloroplastic of Pisum sativum (Garden pea).